A 503-amino-acid polypeptide reads, in one-letter code: Transmembrane prolyl 4-hydroxylase (503 aa).

Positions 1-49 are disordered; that stretch reads MAAAVATVQRPEAETVEEASNLQWPLPPEHRPSGAATRPGDSEDAPVRP. The Cytoplasmic portion of the chain corresponds to 1–61; that stretch reads MAAAVATVQR…KPRGICSRAY (61 aa). Residues 62–82 form a helical; Signal-anchor for type II membrane protein membrane-spanning segment; that stretch reads FLVLMVFVHLYLGNVLALLLF. Topologically, residues 83-503 are lumenal; sequence VHYSNGDEST…RAYSDARVEL (421 aa). Positions 90–110 are disordered; it reads ESTDPGPQRREQSPQPVPTLG. EF-hand domains lie at 186 to 221 and 225 to 260; these read AMQVSQLDLFQLLDQNHDGRLQLREVLAQTRLGNGR and PENIQEMYSAIKADPDGDGVLSLQEFSNMDLRDFHK. Positions 199, 201, 203, 205, 210, 238, 240, 242, and 249 each coordinate Ca(2+). In terms of domain architecture, Fe2OG dioxygenase spans 310 to 461; sequence EFSEPLQVVR…KWIANNWINV (152 aa). The Fe cation site is built by His329 and Asp331. N-linked (GlcNAc...) asparagine glycans are attached at residues Asn349 and Asn369. Fe cation is bound at residue Glu375. N-linked (GlcNAc...) asparagine glycosylation is present at Asn383. Residue Lys452 coordinates 2-oxoglutarate.

As to quaternary structure, homodimer. Fe(2+) is required as a cofactor. Requires L-ascorbate as cofactor. Post-translationally, glycosylated. In terms of tissue distribution, highest expression levels are detected in the eye and brain, especially in the retinal epithelium cells and cortical neurons. Also expressed in skeletal muscle, lung, heart, adrenal gland, kidney, prostate, thyroid and testis.

It is found in the endoplasmic reticulum membrane. The catalysed reaction is L-prolyl-[hypoxia-inducible factor alpha subunit] + 2-oxoglutarate + O2 = trans-4-hydroxy-L-prolyl-[hypoxia-inducible factor alpha subunit] + succinate + CO2. Functionally, catalyzes the post-translational formation of 4-hydroxyproline in hypoxia-inducible factor (HIF) alpha proteins. Hydroxylates HIF1A at 'Pro-402' and 'Pro-564'. May function as a cellular oxygen sensor and, under normoxic conditions, may target HIF through the hydroxylation for proteasomal degradation via the von Hippel-Lindau ubiquitination complex. This Mus musculus (Mouse) protein is Transmembrane prolyl 4-hydroxylase (P4htm).